The following is a 1182-amino-acid chain: Tyrosine-protein kinase ABL2 (1182 aa).

Residues 1–42 (MGQQVGRVGEAPGLQQPQPRGIRGSSAARPSGRRRDPAGRTA) form a disordered region. Gly-2 carries N-myristoyl glycine lipidation. The segment at 2 to 106 (GQQVGRVGEA…SKENLLGATE (105 aa)) is CAP. Over residues 20–30 (RGIRGSSAARP) the composition is skewed to low complexity. Ser-97 carries the post-translational modification Phosphoserine. The SH3 domain maps to 107 to 167 (SDPNLFVALY…PSNYITPVNS (61 aa)). A phosphotyrosine mark is found at Tyr-116, Tyr-161, Tyr-174, Tyr-185, Tyr-218, and Tyr-231. In terms of domain architecture, SH2 spans 173 to 263 (WYHGPVSRSA…GLVTTLHYPA (91 aa)). A Phosphotyrosine; by ABL1 and autocatalysis modification is found at Tyr-261. The residue at position 272 (Tyr-272) is a Phosphotyrosine; by autocatalysis. Phosphoserine is present on Ser-275. Positions 288-539 (ITMKHKLGGG…PSFAETHQAF (252 aa)) constitute a Protein kinase domain. Residue 294–302 (LGGGQYGEV) coordinates ATP. Phosphotyrosine occurs at positions 299 and 303. ATP is bound by residues Lys-317 and 362-368 (EYMPYGN). Asp-409 (proton acceptor) is an active-site residue. The short motif at 427 to 451 (DFGLSRLMTGDTYTAHAGAKFPIKW) is the Kinase activation loop element. Phosphotyrosine; by autocatalysis and SRC-type Tyr-kinases is present on Tyr-439. Tyr-459 carries the phosphotyrosine modification. Tyr-568 is subject to Phosphotyrosine; by autocatalysis. Residues Ser-606, Ser-621, Ser-632, Ser-634, and Ser-656 each carry the phosphoserine modification. Disordered stretches follow at residues 612–642 (IRST…DAKE) and 655–674 (SSFM…SSFR). Residues 659–661 (KKR) carry the Nuclear localization signal motif. 3 positions are modified to phosphoserine: Ser-670, Ser-671, and Ser-672. Position 684 is a phosphotyrosine; by autocatalysis (Tyr-684). The tract at residues 695-930 (SLQNADGFSV…AVLPTTHNHK (236 aa)) is F-actin-binding. Tyr-719 carries the post-translational modification Phosphotyrosine. Residues 765-796 (LRAGKPTASDDTSKPFPRSNSTSSMSSGLPEQ) are disordered. Lys-778 carries the post-translational modification N6-acetyllysine. The segment covering 782–793 (RSNSTSSMSSGL) has biased composition (polar residues). A Phosphoserine modification is found at Ser-785. Thr-802 is subject to Phosphothreonine. Over residues 809–825 (RSKLQLERTVSTSSQPE) the composition is skewed to polar residues. A disordered region spans residues 809-858 (RSKLQLERTVSTSSQPEENVDRANDMLPKKSEEGAAPARERPKAKLLPRG). Residues Ser-819 and Ser-822 each carry the phosphoserine modification. Residues 827-851 (NVDRANDMLPKKSEEGAAPARERPK) are compositionally biased toward basic and acidic residues. 2 positions are modified to phosphoserine: Ser-915 and Ser-936. The segment at 964–1059 (HQVTSSGDKD…TSSISPAKMA (96 aa)) is disordered. The segment at 1020–1182 (EGGKKAAPGP…VQEISDVVQR (163 aa)) is F-actin-binding.

The protein belongs to the protein kinase superfamily. Tyr protein kinase family. ABL subfamily. Interacts with PSMA7. Interacts with CTTN. Found in a complex with ABL1, ABL2, CRK and UNC119; leading to the inhibition of CRK phosphorylation by ABL kinases. Mg(2+) is required as a cofactor. Requires Mn(2+) as cofactor. In terms of processing, phosphorylated at Tyr-261 by ABL1 in response to oxidative stress. Phosphorylated by PDGFRB. Post-translationally, polyubiquitinated. Polyubiquitination of ABL2 leads to degradation. In terms of tissue distribution, most abundant in adult mouse brain, especially in synapse-rich regions.

The protein localises to the cytoplasm. It localises to the cytoskeleton. The enzyme catalyses L-tyrosyl-[protein] + ATP = O-phospho-L-tyrosyl-[protein] + ADP + H(+). Its activity is regulated as follows. Stabilized in the inactive form by an association between the SH3 domain and the SH2-TK linker region, interactions of the N-terminal cap, and contributions from an N-terminal myristoyl group and phospholipids. Activated by autophosphorylation as well as by SRC-family kinase-mediated phosphorylation. Activated by RIN1 binding to the SH2 and SH3 domains. Inhibited by imatinib mesylate (Gleevec). Phosphatidylinositol 4,5-bisphosphate (PIP2), a highly abundant phosphoinositide known to regulate cytoskeletal and membrane proteins, inhibits the tyrosine kinase activity. Functionally, non-receptor tyrosine-protein kinase that plays an ABL1-overlapping role in key processes linked to cell growth and survival such as cytoskeleton remodeling in response to extracellular stimuli, cell motility and adhesion, receptor endocytosis, autophagy, DNA damage response and apoptosis. Coordinates actin remodeling through tyrosine phosphorylation of proteins controlling cytoskeleton dynamics like MYH10 (involved in movement); CTTN (involved in signaling); or TUBA1 and TUBB (microtubule subunits). Binds directly F-actin and regulates actin cytoskeletal structure through its F-actin-bundling activity. Involved in the regulation of cell adhesion and motility through phosphorylation of key regulators of these processes such as CRK, CRKL or DOK1. Required for adhesion-dependent phosphorylation of ARHGAP35 which promotes its association with RASA1, resulting in recruitment of ARHGAP35 to the cell periphery where it inhibits RHO. Phosphorylates multiple receptor tyrosine kinases like PDGFRB and other substrates which are involved in endocytosis regulation such as RIN1. In brain, may regulate neurotransmission by phosphorylating proteins at the synapse. Finally, functions as its own regulator through autocatalytic activity as well as through phosphorylation of its inhibitor, ABI1. Positively regulates chemokine-mediated T-cell migration, polarization, and homing to lymph nodes and immune-challenged tissues, potentially via activation of NEDD9/HEF1 and RAP1. The chain is Tyrosine-protein kinase ABL2 from Mus musculus (Mouse).